The sequence spans 380 residues: Ubiquitin-like protein 7 (380 aa).

Positions 18-98 (APKSILQLPE…VLRKSWPEPD (81 aa)) constitute a Ubiquitin-like domain. A disordered region spans residues 200 to 313 (TPMPGADSSS…SSGVQSGTPI (114 aa)). Residues 206 to 221 (DSSSRSMPSSSYRDMP) are compositionally biased toward low complexity. A Phosphoserine modification is found at Ser-230. Composition is skewed to low complexity over residues 239–253 (STRS…SSRP) and 270–293 (SELA…TPGT). A compositionally biased stretch (polar residues) spans 294 to 313 (QGHSSGTSPMSSGVQSGTPI). In terms of domain architecture, UBA spans 333–377 (SLQIQWQPQLQQLRDMGIQDDELSLRALQATGGDIQAALELIFAG).

In terms of assembly, binds ubiquitin. Interacts with MAVS; this interaction enhances TRIM21-dependent 'Lys-27'-linked polyubiquitination of MAVS. In terms of processing, deubiquitinated by OTUD4 which stabilizes UBL7 expression.

In terms of biological role, interferon-stimulated protein that positively regulates RNA virus-triggered innate immune signaling. Mechanistically, promotes 'Lys-27'-linked polyubiquitination of MAVS through TRIM21 leading to enhanced the IFN signaling pathway. The chain is Ubiquitin-like protein 7 (Ubl7) from Mus musculus (Mouse).